Here is a 60-residue protein sequence, read N- to C-terminus: UPF0434 protein Bpro_2950 (60 aa).

Belongs to the UPF0434 family.

The sequence is that of UPF0434 protein Bpro_2950 from Polaromonas sp. (strain JS666 / ATCC BAA-500).